The sequence spans 626 residues: Trehalase (626 aa).

The signal sequence occupies residues 1–35 (MASSCSIRCGSRNILVNAAATFLALLVVLRCFANA). Residues 36-595 (EKPSPCQSDV…STPQPVVVST (560 aa)) lie on the Extracellular side of the membrane. N104 carries N-linked (GlcNAc...) asparagine glycosylation. Substrate-binding positions include R181, 188-189 (WD), N225, and 234-236 (RSQ). N274 is a glycosylation site (N-linked (GlcNAc...) asparagine). Residues 299–301 (RPE) and G333 contribute to the substrate site. The active-site Proton donor/acceptor is D335. Residues N350, N384, N498, and N525 are each glycosylated (N-linked (GlcNAc...) asparagine). E532 (proton donor/acceptor) is an active-site residue. Residue E547 participates in substrate binding. Residues 596–616 (AGQVMTGILALVISLAAGFIG) traverse the membrane as a helical segment. The Cytoplasmic segment spans residues 617–626 (KMRCANNAAQ).

Belongs to the glycosyl hydrolase 37 family. Monomer. In terms of processing, glycosylated; contains 3.1% carbohydrates.

Its subcellular location is the membrane. The enzyme catalyses alpha,alpha-trehalose + H2O = alpha-D-glucose + beta-D-glucose. Its activity is regulated as follows. Inhibited by sodium, potassium and ammonium ions, and by TEMED. This Apis mellifera (Honeybee) protein is Trehalase.